A 435-amino-acid polypeptide reads, in one-letter code: Astacin-like metalloendopeptidase (435 aa).

A signal peptide spans Met-1–Gly-23. In terms of domain architecture, Peptidase M12A spans Arg-85–Ser-282. 2 disulfides stabilise this stretch: Cys-132–Cys-281 and Cys-153–Cys-172. Position 182 (His-182) interacts with Zn(2+). Glu-183 is an active-site residue. Zn(2+)-binding residues include His-186 and His-192. The segment covering Ser-318–Ser-329 has biased composition (low complexity). The interval Ser-318 to Val-356 is disordered. Polar residues predominate over residues Gly-340 to Ser-355.

In terms of assembly, interacts (via N-terminal domain) with SPACA3; the interaction occurs during fertilization. It depends on Zn(2+) as a cofactor. Ovary-specific. Expressed in secondary, antral and Graafian follicle oocytes. Expressed in the egg cells. Not detected in two-cell embryos. Not detected in naked oocytes, oocytes in primordial or unilaminar primary follicles, or in any other ovarian cells at pre-pubertal, pubertal or adult stages (at protein level). Ovary-specific.

The protein localises to the cytoplasm. It localises to the cell membrane. It is found in the cytoplasmic vesicle. The protein resides in the secretory vesicle. Its subcellular location is the cortical granule. Inhibited by wide spectrum metalloproteinase inhibitor batimastat (BB-94). Also inhibited by EDTA. Its function is as follows. Oocyte-specific oolemmal receptor involved in sperm and egg adhesion and fertilization. Plays a role in the polyspermy inhibition. Probably acts as a protease for the post-fertilization cleavage of ZP2. Cleaves the sperm-binding ZP2 at the surface of the zona pellucida after fertilization and cortical granule exocytosis, rendering the zona pellucida unable to support further sperm binding. This Mus musculus (Mouse) protein is Astacin-like metalloendopeptidase.